A 70-amino-acid chain; its full sequence is Large ribosomal subunit protein bL31 (70 aa).

Residues Cys16, Cys18, Cys37, and Cys40 each coordinate Zn(2+).

Belongs to the bacterial ribosomal protein bL31 family. Type A subfamily. In terms of assembly, part of the 50S ribosomal subunit. Requires Zn(2+) as cofactor.

Functionally, binds the 23S rRNA. This is Large ribosomal subunit protein bL31 from Ectopseudomonas mendocina (strain ymp) (Pseudomonas mendocina).